The primary structure comprises 560 residues: Nuclear receptor subfamily 5 group A member 2 (560 aa).

Positions 21 to 55 (IASAPGSETRHSPKREEQLREKRAGLPDRHRRPIP) are disordered. The span at 28-48 (ETRHSPKREEQLREKRAGLPD) shows a compositional bias: basic and acidic residues. The nuclear receptor DNA-binding region spans 104-175 (EELCPVCGDK…KCIDVGMKLE (72 aa)). Zn(2+) contacts are provided by Cys107, Cys110, Cys124, Cys127, Cys143, Cys149, Cys159, and Cys162. 2 NR C4-type zinc fingers span residues 107 to 127 (CPVC…CESC) and 143 to 167 (CIEN…FKKC). A C-terminal extension (CTE) region spans residues 173-188 (KLEAVRADRMRGGRNK). The FTZ-F1 box motif lies at 189 to 208 (FGPMYKRDRALKQQKKALIR). Lys289 is covalently cross-linked (Glycyl lysine isopeptide (Lys-Gly) (interchain with G-Cter in SUMO1)). An NR LBD domain is found at 319–558 (SIPHLILELL…NLLIEMLHAK (240 aa)). Residues Tyr535 and Lys539 each contribute to the a phospholipid derivative site. Residues 547 to 558 (YNNLLIEMLHAK) are AF-2.

This sequence belongs to the nuclear hormone receptor family. NR5 subfamily. In terms of assembly, monomer; Binds DNA as a monomer. Interacts with nuclear receptor corepressors NR0B1 and NR0B2; repressing NR5A2 nuclear receptor activity. Interacts with nuclear receptor coactivators CTNNB1, PPARGC1A and NCOA2; interaction takes place following ligand-binding and promotes target gene activation. Interacts (when sumoylated) with GPS2; interaction with GPS2 onto hepatic acute phase protein promoters prevents N-Cor corepressor complex dissociation. Interacts with HNF1A. Interacts with GRIP1. In terms of processing, sumoylated by SUMO1 at Lys-289 during the hepatic acute phase response, leading to promote interaction with GPS2 and prevent N-Cor corepressor complex dissociation.

It is found in the nucleus. It localises to the chromosome. Orphan nuclear receptor that binds DNA as a monomer to the 5'-TCAAGGCCA-3' sequence and controls expression of target genes: regulates key biological processes, such as early embryonic development, cholesterol and bile acid synthesis pathways, as well as liver and pancreas morphogenesis. Ligand-binding causes conformational change which causes recruitment of coactivators, promoting target gene activation. The specific ligand is unknown, but specific phospholipids, such as phosphatidylethanolamine, phosphatidylserine, dilauroyl phosphatidylcholine and diundecanoyl phosphatidylcholine can act as ligand in vitro. Acts as a pioneer transcription factor, which unwraps target DNA from histones and elicits local opening of closed chromatin. Plays a central role during preimplantation stages of embryonic development. Plays a minor role in zygotic genome activation (ZGA) by regulating a small set of two-cell stage genes. Plays a major role in morula development (2-16 cells embryos) by acting as a master regulator at the 8-cell stage, controlling expression of lineage-specifying transcription factors and genes involved in mitosis, telomere maintenance and DNA repair. Zygotic NR5A2 binds to both closed and open chromatin with other transcription factors, often at SINE B1/Alu repeats DNA elements, promoting chromatin accessibility at nearby regulatory regions. Also involved in the epiblast stage of development and embryonic stem cell pluripotency, by promoting expression of POU5F1/OCT4. Regulates other processes later in development, such as formation of connective tissue in lower jaw and middle ear, neural stem cell differentiation, ovarian follicle development and Sertoli cell differentiation. Involved in exocrine pancreas development and acinar cell differentiation. Acts as an essential transcriptional regulator of lipid metabolism. Key regulator of cholesterol 7-alpha-hydroxylase gene (CYP7A) expression in liver. Activates the transcription of CYP2C38. Also acts as a negative regulator of inflammation in different organs, such as intestine, liver and pancreas. Protects against intestinal inflammation via its ability to regulate glucocorticoid production. Plays an anti-inflammatory role during the hepatic acute phase response by acting as a corepressor: inhibits the hepatic acute phase response by preventing dissociation of the N-Cor corepressor complex. Acts as a regulator of immunity by promoting lymphocyte T-cell development, proliferation and effector functions. Also involved in resolution of endoplasmic reticulum stress in the liver. The chain is Nuclear receptor subfamily 5 group A member 2 from Mus musculus (Mouse).